The primary structure comprises 463 residues: Regulator of microtubule dynamics protein 3 (463 aa).

The Mitochondrial intermembrane segment spans residues 1-4; it reads MSKL. A helical membrane pass occupies residues 5–27; the sequence is ILSYRIGLGLVVGAAAGAVIYIV. The Cytoplasmic segment spans residues 28-463; sequence FRRNRKKTRK…PATAEEELLV (436 aa). The short motif at 146–161 is the FFAT element; that stretch reads IYFTATSGAAHTDAES. Residues 153-192 are disordered; the sequence is GAAHTDAESEGGYSTAYAESDFERESSRASEAEEEDEVSC. Residues 173-183 show a composition bias toward basic and acidic residues; sequence DFERESSRASE. The stretch at 279–302 forms a coiled coil; that stretch reads AEDAQEKKSFASEGKEEAEAALQK.

It belongs to the RMDN family. As to quaternary structure, interacts with PTPN2. Interacts with microtubules. Interacts with VAPB. Interacts (FFAT motif) with MOSPD2 (via MSP domain).

The protein resides in the mitochondrion outer membrane. Its subcellular location is the cytoplasm. It is found in the nucleus. The protein localises to the cytoskeleton. It localises to the spindle. The protein resides in the spindle pole. In terms of biological role, involved in cellular calcium homeostasis regulation. The polypeptide is Regulator of microtubule dynamics protein 3 (rmdn3) (Xenopus laevis (African clawed frog)).